Consider the following 729-residue polypeptide: Glycine--tRNA ligase, mitochondrial 1 (729 aa).

Position 1 is an N-acetylmethionine (methionine 1). Residues 1-28 constitute a mitochondrion transit peptide; that stretch reads MRIFSTFVFHRRQQIFNLRQFQTTTILR. Residues 50–106 enclose the WHEP-TRS domain; sequence SLSEKSSSVEAQGNAVRALKASRAAKPEIDAAIEQLNKLKLEKSTVEKELQSIISSS. Glutamate 296 is a glycine binding site. ATP is bound by residues 328-330 and 339-340; these read RNE and RV. Glutamate 347 is a binding site for glycine. 454 to 455 is an ATP binding site; the sequence is EC. Position 575–577 (575–577) interacts with glycine; the sequence is EPS. Position 582 (arginine 582) interacts with ATP.

Belongs to the class-II aminoacyl-tRNA synthetase family. As to quaternary structure, homodimer.

The protein resides in the mitochondrion. It is found in the cytoplasm. The protein localises to the cytosol. It carries out the reaction tRNA(Gly) + glycine + ATP = glycyl-tRNA(Gly) + AMP + diphosphate. The enzyme catalyses 2 ATP + H(+) = P(1),P(4)-bis(5'-adenosyl) tetraphosphate + diphosphate. Its function is as follows. Catalyzes the ATP-dependent ligation of glycine to the 3'-end of its cognate tRNA, via the formation of an aminoacyl-adenylate intermediate (Gly-AMP). Also produces diadenosine tetraphosphate (Ap4A), a universal pleiotropic signaling molecule needed for cell regulation pathways, by direct condensation of 2 ATPs. Thereby, may play a special role in Ap4A homeostasis. The sequence is that of Glycine--tRNA ligase, mitochondrial 1 from Arabidopsis thaliana (Mouse-ear cress).